Reading from the N-terminus, the 621-residue chain is Chaperone protein HtpG (621 aa).

The tract at residues 1–341 (MSNQEYTFQT…SEDLPLNVSR (341 aa)) is a; substrate-binding. Positions 342–547 (EILQQNKILA…GDEPNAMMAN (206 aa)) are b. The interval 548 to 621 (WMRQMGQSVP…RLNSVLLKAL (74 aa)) is c.

It belongs to the heat shock protein 90 family. As to quaternary structure, homodimer.

The protein localises to the cytoplasm. Molecular chaperone. Has ATPase activity. The protein is Chaperone protein HtpG of Helicobacter pylori (strain J99 / ATCC 700824) (Campylobacter pylori J99).